A 518-amino-acid chain; its full sequence is uncharacterized protein (518 aa).

ABC transporter domains are found at residues 4–260 and 324–518; these read LSVK…QLEA and LIFE…TKVL. Residues 36 to 43 and 357 to 364 each bind ATP; these read GANGEGKS and GANGIGKT.

This sequence belongs to the ABC transporter superfamily.

This is an uncharacterized protein from Bacillus subtilis (strain 168).